We begin with the raw amino-acid sequence, 280 residues long: Elongation factor 1-delta (280 aa).

N-acetylalanine is present on A2. At K17 the chain carries N6-acetyllysine. Residues S37, S44, S60, S86, and S106 each carry the phosphoserine modification. At K107 the chain carries N6-acetyllysine. A disordered region spans residues S113–T171. Position 117 is an N6-acetyllysine; alternate (K117). K117 carries the post-translational modification N6-succinyllysine; alternate. The residue at position 119 (S119) is a Phosphoserine. T129 is modified (phosphothreonine). S133 bears the Phosphoserine mark. T147 carries the post-translational modification Phosphothreonine. Over residues T149–K168 the composition is skewed to acidic residues. S162 is subject to Phosphoserine; by CK2.

This sequence belongs to the EF-1-beta/EF-1-delta family. In terms of assembly, EF-1 is composed of 4 subunits: alpha, beta, delta, and gamma.

EF-1-beta and EF-1-delta stimulate the exchange of GDP bound to EF-1-alpha to GTP. In Bos taurus (Bovine), this protein is Elongation factor 1-delta (EEF1D).